Reading from the N-terminus, the 308-residue chain is Ectoine dioxygenase (308 aa).

Position 131 (Gln-131) interacts with L-ectoine. Residue Lys-137 coordinates 2-oxoglutarate. Fe cation contacts are provided by His-148, Asp-150, and His-249.

This sequence belongs to the PhyH family. EctD subfamily. Homodimer. The cofactor is Fe(2+).

It catalyses the reaction L-ectoine + 2-oxoglutarate + O2 = 5-hydroxyectoine + succinate + CO2. Involved in the biosynthesis of 5-hydroxyectoine, called compatible solute, which helps organisms to survive extreme osmotic stress by acting as a highly soluble organic osmolyte. Catalyzes the 2-oxoglutarate-dependent selective hydroxylation of L-ectoine to yield (4S,5S)-5-hydroxyectoine. This is Ectoine dioxygenase from Bordetella parapertussis (strain 12822 / ATCC BAA-587 / NCTC 13253).